A 135-amino-acid polypeptide reads, in one-letter code: Cytochrome c2 (135 aa).

The N-terminal stretch at M1–A23 is a signal peptide. Heme c contacts are provided by C37, C40, H41, and M114.

Belongs to the cytochrome c family. Binds 1 heme c group covalently per subunit.

Its function is as follows. Cytochrome c2 is found mainly in purple, non-sulfur, photosynthetic bacteria where it functions as the electron donor to the oxidized bacteriochlorophyll in the photophosphorylation pathway. However, it may also have a role in the respiratory chain and is found in some non-photosynthetic bacteria. The polypeptide is Cytochrome c2 (cycA) (Rhodospirillum rubrum (strain ATCC 11170 / ATH 1.1.1 / DSM 467 / LMG 4362 / NCIMB 8255 / S1)).